Consider the following 273-residue polypeptide: Tryptase-2 (273 aa).

The N-terminal stretch at 1–18 (MLHLLALALLLSLVSAAP) is a signal peptide. Residues 19-28 (APGQALQRSG) constitute a propeptide, activation peptide. One can recognise a Peptidase S1 domain in the interval 29–270 (IIGGKEAPGS…YLDWIHQYVP (242 aa)). Cysteine 57 and cysteine 73 are disulfide-bonded. Catalysis depends on charge relay system residues histidine 72 and aspartate 119. Disulfide bonds link cysteine 153–cysteine 228, cysteine 186–cysteine 209, and cysteine 218–cysteine 246. The active-site Charge relay system is the serine 222. Residue asparagine 231 is glycosylated (N-linked (GlcNAc...) asparagine).

It belongs to the peptidase S1 family. Tryptase subfamily. Homotetramer.

It localises to the secreted. It carries out the reaction Preferential cleavage: Arg-|-Xaa, Lys-|-Xaa, but with more restricted specificity than trypsin.. Functionally, tryptase is the major neutral protease present in mast cells and is secreted upon the coupled activation-degranulation response of this cell type. The protein is Tryptase-2 of Ovis aries (Sheep).